Consider the following 236-residue polypeptide: Demethylmenaquinone methyltransferase (236 aa).

S-adenosyl-L-methionine-binding positions include Thr58, Asp79, and 106–107 (NA).

The protein belongs to the class I-like SAM-binding methyltransferase superfamily. MenG/UbiE family.

It carries out the reaction a 2-demethylmenaquinol + S-adenosyl-L-methionine = a menaquinol + S-adenosyl-L-homocysteine + H(+). It functions in the pathway quinol/quinone metabolism; menaquinone biosynthesis; menaquinol from 1,4-dihydroxy-2-naphthoate: step 2/2. In terms of biological role, methyltransferase required for the conversion of demethylmenaquinol (DMKH2) to menaquinol (MKH2). The polypeptide is Demethylmenaquinone methyltransferase (Alkalihalophilus pseudofirmus (strain ATCC BAA-2126 / JCM 17055 / OF4) (Bacillus pseudofirmus)).